A 535-amino-acid chain; its full sequence is UDP-N-acetylmuramoyl-L-alanyl-D-glutamate--2,6-diaminopimelate ligase (535 aa).

Leu-67 contacts UDP-N-acetyl-alpha-D-muramoyl-L-alanyl-D-glutamate. An ATP-binding site is contributed by 153–159 (GTSGKTT). Residues 195-196 (TT), Ser-222, and Arg-230 contribute to the UDP-N-acetyl-alpha-D-muramoyl-L-alanyl-D-glutamate site. The residue at position 262 (Lys-262) is an N6-carboxylysine. Meso-2,6-diaminopimelate is bound by residues Arg-424, 448-451 (DNPR), Gly-502, and Glu-506. Positions 448–451 (DNPR) match the Meso-diaminopimelate recognition motif motif.

It belongs to the MurCDEF family. MurE subfamily. Mg(2+) serves as cofactor. In terms of processing, carboxylation is probably crucial for Mg(2+) binding and, consequently, for the gamma-phosphate positioning of ATP.

The protein localises to the cytoplasm. The catalysed reaction is UDP-N-acetyl-alpha-D-muramoyl-L-alanyl-D-glutamate + meso-2,6-diaminopimelate + ATP = UDP-N-acetyl-alpha-D-muramoyl-L-alanyl-gamma-D-glutamyl-meso-2,6-diaminopimelate + ADP + phosphate + H(+). It functions in the pathway cell wall biogenesis; peptidoglycan biosynthesis. Functionally, catalyzes the addition of meso-diaminopimelic acid to the nucleotide precursor UDP-N-acetylmuramoyl-L-alanyl-D-glutamate (UMAG) in the biosynthesis of bacterial cell-wall peptidoglycan. The chain is UDP-N-acetylmuramoyl-L-alanyl-D-glutamate--2,6-diaminopimelate ligase from Mycobacterium bovis (strain ATCC BAA-935 / AF2122/97).